The following is a 467-amino-acid chain: Dihydrolipoyl dehydrogenase (467 aa).

Residues glutamate 33–cysteine 41, lysine 50, and glycine 113 contribute to the FAD site. The cysteines at positions 41 and 46 are disulfide-linked. NAD(+) contacts are provided by residues glycine 181–isoleucine 185, glutamate 204, and alanine 269–phenylalanine 272. Positions 312 and 320 each coordinate FAD. Catalysis depends on histidine 446, which acts as the Proton acceptor.

It belongs to the class-I pyridine nucleotide-disulfide oxidoreductase family. In terms of assembly, homodimer. Part of the PDH complex, consisting of multiple copies of AceE (E1), DlaT (E2) and Lpd (E3), and of the BCKADH complex, consisting of multiple copies of BkdA/BkdB (E1), BkdC (E2) and Lpd (E3). FAD serves as cofactor.

The protein localises to the cytoplasm. The enzyme catalyses N(6)-[(R)-dihydrolipoyl]-L-lysyl-[protein] + NAD(+) = N(6)-[(R)-lipoyl]-L-lysyl-[protein] + NADH + H(+). Functionally, lipoamide dehydrogenase is a component of the alpha-ketoacid dehydrogenase complexes. Catalyzes the reoxidation of dihydrolipoyl groups which are covalently attached to the lipoate acyltransferase components (E2) of the complexes. This chain is Dihydrolipoyl dehydrogenase (lpd), found in Mycobacterium leprae (strain TN).